The primary structure comprises 297 residues: Octopine catabolism/uptake operon regulatory protein OccR (297 aa).

Residues 1 to 58 (MNLRQVEAFRAVMLTGQMTAAAELMLVTQPAISRLIKDFERATKLQLFERRGNHIIPT) form the HTH lysR-type domain. Residues 18 to 37 (MTAAAELMLVTQPAISRLIK) constitute a DNA-binding region (H-T-H motif).

Belongs to the LysR transcriptional regulatory family.

Positive regulatory protein for the occ operon involved in octopine catabolism and uptake. Also acts as a negative regulator of its expression. The protein is Octopine catabolism/uptake operon regulatory protein OccR (occR) of Rhizobium meliloti (Ensifer meliloti).